We begin with the raw amino-acid sequence, 297 residues long: 4-hydroxy-tetrahydrodipicolinate synthase (297 aa).

T47 lines the pyruvate pocket. The active-site Proton donor/acceptor is the Y136. The active-site Schiff-base intermediate with substrate is the K165. T206 contributes to the pyruvate binding site.

It belongs to the DapA family. As to quaternary structure, homotetramer; dimer of dimers.

Its subcellular location is the cytoplasm. It catalyses the reaction L-aspartate 4-semialdehyde + pyruvate = (2S,4S)-4-hydroxy-2,3,4,5-tetrahydrodipicolinate + H2O + H(+). Its pathway is amino-acid biosynthesis; L-lysine biosynthesis via DAP pathway; (S)-tetrahydrodipicolinate from L-aspartate: step 3/4. Functionally, catalyzes the condensation of (S)-aspartate-beta-semialdehyde [(S)-ASA] and pyruvate to 4-hydroxy-tetrahydrodipicolinate (HTPA). This is 4-hydroxy-tetrahydrodipicolinate synthase from Sulfurovum sp. (strain NBC37-1).